The primary structure comprises 1091 residues: Protein CTR9 homolog (1091 aa).

Alanine 2 is subject to N-acetylalanine. TPR repeat units follow at residues glycine 90–glutamate 127, proline 128–asparagine 161, proline 163–cysteine 195, alanine 197–asparagine 230, glutamate 232–cysteine 267, serine 305–asparagine 338, valine 343–asparagine 376, cysteine 377–aspartate 410, glutamine 412–glycine 443, isoleucine 449–isoleucine 482, isoleucine 558–asparagine 591, asparagine 593–lysine 625, alanine 640–asparagine 673, methionine 674–serine 707, proline 713–asparagine 746, and serine 749–asparagine 782. A disordered region spans residues phenylalanine 919 to asparagine 1091. A compositionally biased stretch (basic residues) spans glutamate 951–lysine 965. 4 stretches are compositionally biased toward acidic residues: residues aspartate 974–alanine 993, methionine 1003–alanine 1016, glutamate 1026–valine 1035, and asparagine 1080–asparagine 1091.

Component of the nuclear PAF1 complex (PAF1C), which consists of VIP2/ELF7/PAF1, VIP3/SKI8/WDR61, VIP4/LEO1, VIP5/RTF1, VIP6/ELF8/CTR9 and CDC73. Interacts with VIP3 and VIP4. As to expression, expressed in roots, leaves and shoot apex.

Its subcellular location is the nucleus. Its function is as follows. Component of the PAF1 complex (PAF1C) which is involved in histone modifications such as methylation on histone H3 'Lys-4' (H3K4me3). Involved in regulation of flowering time. Required for the expression of the MADS box genes and flowering repressors FLC, AGL27/FLM and AGL31/MAF2. Required for histone H3 trimethylation on 'Lys-4' H3K4me3 at the FLC and AGL27/FLM loci. Involved in the control of seed dormancy and germination. The polypeptide is Protein CTR9 homolog (Arabidopsis thaliana (Mouse-ear cress)).